Reading from the N-terminus, the 124-residue chain is Protein archease (124 aa).

Ca(2+)-binding residues include His7, Asp10, Asp123, and Thr124.

It belongs to the archease family.

In terms of biological role, activates the tRNA-splicing ligase complex by facilitating the enzymatic turnover of catalytic subunit RtcB. Acts by promoting the guanylylation of RtcB, a key intermediate step in tRNA ligation. Can also alter the NTP specificity of RtcB such that ATP, dGTP or ITP is used efficiently. May also act as a chaperone or modulator of proteins involved in DNA or RNA processing. The chain is Protein archease from Thermotoga maritima (strain ATCC 43589 / DSM 3109 / JCM 10099 / NBRC 100826 / MSB8).